The following is a 145-amino-acid chain: MSDAQTHGTVLAFDLGLKRTGVASGELAIGIAHPLTVIQAESTDARMAAIEKLAAEWQPALFVLGLPTRADGSENEMTRVARNFARRLESRFERPVFLIDERLTSATAESELHARGIHGKKNKALTDAVAAQLILQGFFDARLTA.

The protein belongs to the YqgF nuclease family.

It is found in the cytoplasm. Functionally, could be a nuclease involved in processing of the 5'-end of pre-16S rRNA. The sequence is that of Putative pre-16S rRNA nuclease from Thiobacillus denitrificans (strain ATCC 25259 / T1).